The chain runs to 91 residues: UPF0250 protein Pfl01_4965 (91 aa).

This sequence belongs to the UPF0250 family.

In Pseudomonas fluorescens (strain Pf0-1), this protein is UPF0250 protein Pfl01_4965.